The following is a 190-amino-acid chain: Vascular endothelial growth factor A (190 aa).

Residues 1–26 form the signal peptide; it reads MNFLLSWVHWTLALLLYLHHAKWSQA. Cystine bridges form between C51–C93, C82–C127, and C86–C129. An N-linked (GlcNAc...) asparagine glycan is attached at N100.

Belongs to the PDGF/VEGF growth factor family. As to quaternary structure, homodimer; disulfide-linked. Also found as heterodimer with PGF. Interacts with NRP1. Interacts with isoform 2 of BSG. Interacts with CD82; this interaction inhibits VEGFA-mediated signaling pathway.

The protein localises to the secreted. In terms of biological role, growth factor active in angiogenesis, vasculogenesis and endothelial cell growth. Induces endothelial cell proliferation, promotes cell migration, inhibits apoptosis and induces permeabilization of blood vessels. Binds to the FLT1/VEGFR1 and KDR/VEGFR2 receptors, heparan sulfate and heparin. Binding to NRP1 receptor initiates a signaling pathway needed for motor neuron axon guidance and cell body migration, including for the caudal migration of facial motor neurons from rhombomere 4 to rhombomere 6 during embryonic development. Also binds the DEAR/FBXW7-AS1 receptor. This Mesocricetus auratus (Golden hamster) protein is Vascular endothelial growth factor A (VEGFA).